Reading from the N-terminus, the 205-residue chain is Protein Nef (205 aa).

Residue Gly-2 is the site of N-myristoyl glycine; by host attachment. At Ser-6 the chain carries Phosphoserine; by host. An acidic; interacts with host PACS1 and PACS2; stabilizes the interaction of NEF/MHC-I with host AP1M1; necessary for MHC-I internalization region spans residues 62–65; sequence DNEE. An SH3-binding; interaction with Src family tyrosine kinases region spans residues 69–78; that stretch reads PVRPQVPTRP. The short motif at 72–75 is the PxxP; stabilizes the interaction of NEF/MHC-I with host AP1M1; necessary for MHC-I internalization element; it reads PQVP. The segment at 108–124 is mediates dimerization, Nef-PTE1 interaction; the sequence is EILDLWVYHTQGFFPDW. The binding to ATP6V1H stretch occupies residues 148–180; the sequence is LTEEQVEQANEGDNNCLLHPICQHGMEDEDKEV. Residues 164–165 carry the Dileucine internalization motif; necessary for CD4 internalization motif; the sequence is LL. Residues 174–175 carry the Diacidic; necessary for CD4 internalization motif; the sequence is ED.

This sequence belongs to the lentivirus primate group Nef protein family. In terms of assembly, monomer; cytosolic form. Homodimer; membrane bound form. Interacts with Nef associated p21-activated kinase (PAK2); this interaction activates PAK2. Associates with the Nef-MHC-I-AP1 complex; this complex is required for MHC-I internalization. Interacts (via C-terminus) with host PI3-kinase. Interacts with host PACS1; this interaction seems to be weak. Interacts with host PACS2. Interacts with host LCK and MAPK3; these interactions inhibit the kinase activity of the latter. Interacts with host ATP6V1H; this interaction may play a role in CD4 endocytosis. Associates with the CD4-Nef-AP2 complex; this complex is required for CD4 internalization. Interacts with host AP2 subunit alpha and AP2 subunit sigma2. Interacts with TCR-zeta chain; this interaction up-regulates the Fas ligand (FasL) surface expression. Interacts with host HCK, LYN, and SRC; these interactions activate the Src family kinases. Interacts with MAP3K5; this interaction inhibits the Fas and TNFR-mediated death signals. Interacts with beta-COP and PTE1. Interacts with human RACK1; this increases Nef phosphorylation by PKC. Interacts with TP53; this interaction decreases the half-life of TP53, protecting the infected cell against p53-mediated apoptosis. In terms of processing, the virion-associated Nef proteins are cleaved by the viral protease to release the soluble C-terminal core protein. Nef is probably cleaved concomitantly with viral structural proteins on maturation of virus particles. Myristoylated. Post-translationally, phosphorylated on serine residues, probably by host PKCdelta and theta.

It is found in the host cell membrane. The protein localises to the virion. It localises to the secreted. The protein resides in the host Golgi apparatus membrane. Its function is as follows. Factor of infectivity and pathogenicity, required for optimal virus replication. Alters numerous pathways of T-lymphocyte function and down-regulates immunity surface molecules in order to evade host defense and increase viral infectivity. Alters the functionality of other immunity cells, like dendritic cells, monocytes/macrophages and NK cells. Functionally, in infected CD4(+) T-lymphocytes, down-regulates the surface MHC-I, mature MHC-II, CD4, CD28, CCR5 and CXCR4 molecules. Mediates internalization and degradation of host CD4 through the interaction of with the cytoplasmic tail of CD4, the recruitment of AP-2 (clathrin adapter protein complex 2), internalization through clathrin coated pits, and subsequent transport to endosomes and lysosomes for degradation. Diverts host MHC-I molecules to the trans-Golgi network-associated endosomal compartments by an endocytic pathway to finally target them for degradation. MHC-I down-regulation may involve AP-1 (clathrin adapter protein complex 1) or possibly Src family kinase-ZAP70/Syk-PI3K cascade recruited by PACS2. In consequence infected cells are masked for immune recognition by cytotoxic T-lymphocytes. Decreasing the number of immune receptors also prevents reinfection by more HIV particles (superinfection). Down-regulates host SERINC3 and SERINC5 thereby excluding these proteins from the viral particles. Virion infectivity is drastically higher when SERINC3 or SERINC5 are excluded from the viral envelope, because these host antiviral proteins impair the membrane fusion event necessary for subsequent virion penetration. In terms of biological role, bypasses host T-cell signaling by inducing a transcriptional program nearly identical to that of anti-CD3 cell activation. Interaction with TCR-zeta chain up-regulates the Fas ligand (FasL). Increasing surface FasL molecules and decreasing surface MHC-I molecules on infected CD4(+) cells send attacking cytotoxic CD8+ T-lymphocytes into apoptosis. Plays a role in optimizing the host cell environment for viral replication without causing cell death by apoptosis. Protects the infected cells from apoptosis in order to keep them alive until the next virus generation is ready to strike. Inhibits the Fas and TNFR-mediated death signals by blocking MAP3K5/ASK1. Decreases the half-life of TP53, protecting the infected cell against p53-mediated apoptosis. Inhibits the apoptotic signals regulated by the Bcl-2 family proteins through the formation of a Nef/PI3-kinase/PAK2 complex that leads to activation of PAK2 and induces phosphorylation of host BAD. Its function is as follows. Extracellular Nef protein targets CD4(+) T-lymphocytes for apoptosis by interacting with CXCR4 surface receptors. This is Protein Nef from Simian immunodeficiency virus (isolate CPZ GAB1) (SIV-cpz).